The primary structure comprises 482 residues: 2-succinylbenzoate--CoA ligase (482 aa).

The protein belongs to the ATP-dependent AMP-binding enzyme family. MenE subfamily.

The enzyme catalyses 2-succinylbenzoate + ATP + CoA = 2-succinylbenzoyl-CoA + AMP + diphosphate. Its pathway is quinol/quinone metabolism; 1,4-dihydroxy-2-naphthoate biosynthesis; 1,4-dihydroxy-2-naphthoate from chorismate: step 5/7. It functions in the pathway quinol/quinone metabolism; menaquinone biosynthesis. Converts 2-succinylbenzoate (OSB) to 2-succinylbenzoyl-CoA (OSB-CoA). The sequence is that of 2-succinylbenzoate--CoA ligase from Bacillus anthracis (strain A0248).